We begin with the raw amino-acid sequence, 87 residues long: Toxin ICK-41 (87 aa).

An N-terminal signal peptide occupies residues 1-19 (MKPIVYMLLFCAFTVVILG). Intrachain disulfides connect cysteine 40/cysteine 54, cysteine 40/cysteine 77, cysteine 53/cysteine 66, and cysteine 80/cysteine 87.

This sequence belongs to the neurotoxin 27 (Jztx-72) family. ICK-41 subfamily. Expressed by the venom gland.

It is found in the secreted. In terms of biological role, probable neurotoxin with ion channel impairing activity. The protein is Toxin ICK-41 of Trittame loki (Brush-footed trapdoor spider).